Consider the following 170-residue polypeptide: UPF0260 protein RPE_1881 (170 aa).

The protein belongs to the UPF0260 family.

The protein is UPF0260 protein RPE_1881 of Rhodopseudomonas palustris (strain BisA53).